Consider the following 533-residue polypeptide: DnaJ homolog subfamily C member 21 (533 aa).

A J domain is found at 3 to 70 (CHYEALGVRR…ERAWYDNHRE (68 aa)). Disordered regions lie at residues 278 to 311 (QFGDGSGEDEAEDQELRDGQDGKDSDEAEDAELY), 327 to 473 (KAMR…RVPA), and 503 to 533 (KATGHARAPSSSTSLNSVTNSRNKKEKRKNR). Residues S283 and S302 each carry the phosphoserine modification. Residues 291 to 302 (QELRDGQDGKDS) are compositionally biased toward basic and acidic residues. The segment at 315–339 (YCPACDKSFKTEKAMRNHEKSKKHR) adopts a C2H2-type 1 zinc-finger fold. Polar residues predominate over residues 357–369 (SGPQTDENSLNAN). A Phosphoserine modification is found at S370. Positions 381 to 392 (KLSRKQKKKKQK) are enriched in basic residues. The span at 393-403 (PAQNYDDNFNE) shows a compositional bias: polar residues. Positions 455-464 (SKPKGKKAKD) are enriched in basic residues. The C2H2-type 2 zinc-finger motif lies at 484–508 (SCTTCHSEFPSRNKLFDHLKATGHA). The residue at position 512 (S512) is a Phosphoserine. The segment covering 512 to 523 (SSSTSLNSVTNS) has biased composition (low complexity). Residues 524 to 533 (RNKKEKRKNR) are compositionally biased toward basic residues.

In terms of assembly, interacts with HSPA8, PA2G4 and ZNF622.

It is found in the cytoplasm. It localises to the nucleus. The protein localises to the nucleolus. Functionally, may act as a co-chaperone for HSP70. May play a role in ribosomal RNA (rRNA) biogenesis, possibly in the maturation of the 60S subunit. Binds the precursor 45S rRNA. In Bos taurus (Bovine), this protein is DnaJ homolog subfamily C member 21 (DNAJC21).